Reading from the N-terminus, the 30-residue chain is Unknown protein from spot 365 of 2D-PAGE of etiolated coleoptile (30 aa).

The protein belongs to the zinc-containing alcohol dehydrogenase family.

In Zea mays (Maize), this protein is Unknown protein from spot 365 of 2D-PAGE of etiolated coleoptile.